Reading from the N-terminus, the 311-residue chain is tRNA-cytidine(32) 2-sulfurtransferase (311 aa).

The short motif at 47–52 (SGGKDS) is the PP-loop motif element. The [4Fe-4S] cluster site is built by Cys122, Cys125, and Cys213.

It belongs to the TtcA family. In terms of assembly, homodimer. The cofactor is Mg(2+). It depends on [4Fe-4S] cluster as a cofactor.

Its subcellular location is the cytoplasm. It carries out the reaction cytidine(32) in tRNA + S-sulfanyl-L-cysteinyl-[cysteine desulfurase] + AH2 + ATP = 2-thiocytidine(32) in tRNA + L-cysteinyl-[cysteine desulfurase] + A + AMP + diphosphate + H(+). It functions in the pathway tRNA modification. Catalyzes the ATP-dependent 2-thiolation of cytidine in position 32 of tRNA, to form 2-thiocytidine (s(2)C32). The sulfur atoms are provided by the cysteine/cysteine desulfurase (IscS) system. The sequence is that of tRNA-cytidine(32) 2-sulfurtransferase from Escherichia coli O157:H7.